A 749-amino-acid chain; its full sequence is Protein lin-54 homolog (749 aa).

Residue Lys-139 forms a Glycyl lysine isopeptide (Lys-Gly) (interchain with G-Cter in SUMO2) linkage. Residues Lys-244 and Lys-249 each carry the N6-acetyllysine modification. Ser-264, Ser-282, Ser-310, and Ser-314 each carry phosphoserine. Lys-357 is covalently cross-linked (Glycyl lysine isopeptide (Lys-Gly) (interchain with G-Cter in SUMO2)). The CRC domain occupies 521–634 (PRKPCNCTKS…KCIGCKNFEE (114 aa)). Residues 523-536 (KPCNCTKSLCLKLY) form a DNA-binding region. Zn(2+) contacts are provided by Cys-525, Cys-527, Cys-532, Cys-537, Cys-539, Cys-546, Cys-549, Cys-551, and Cys-554. Residues 583–596 (IGKGKEGESDRRHS) form a linker region. Zn(2+)-binding residues include Cys-599, Cys-601, Cys-606, Cys-611, Cys-613, Cys-620, Cys-624, Cys-626, and Cys-629. The interval 599-612 (CNCKRSGCLKNYCE) is DNA-binding. Ser-635 is modified (phosphoserine). Glycyl lysine isopeptide (Lys-Gly) (interchain with G-Cter in SUMO2) cross-links involve residues Lys-639, Lys-659, and Lys-661.

Belongs to the lin-54 family. As to quaternary structure, component of the DREAM complex (also named LINC complex) at least composed of E2F4, E2F5, LIN9, LIN37, LIN52, LIN54, MYBL1, MYBL2, RBL1, RBL2, RBBP4, RBL2, TFDP1 and TFDP2. The complex exists in quiescent cells where it represses cell cycle-dependent genes. It dissociates in S phase when LIN9, LIN37, LIN52 and LIN54 form a subcomplex that binds to MYBL2.

It is found in the nucleus. Component of the DREAM complex, a multiprotein complex that can both act as a transcription activator or repressor depending on the context. In G0 phase, the complex binds to more than 800 promoters and is required for repression of E2F target genes. In S phase, the complex selectively binds to the promoters of G2/M genes whose products are required for mitosis and participates in their cell cycle dependent activation. In the complex, acts as a DNA-binding protein that binds the promoter of CDK1 in a sequence-specific manner. Specifically recognizes the consensus motif 5'-TTYRAA-3' in target DNA. This is Protein lin-54 homolog (Lin54) from Mus musculus (Mouse).